The following is a 403-amino-acid chain: Cysteine desulfurase IscS (403 aa).

Residues 73–74 (AT), N153, Q181, and 201–203 (SAH) contribute to the pyridoxal 5'-phosphate site. At K204 the chain carries N6-(pyridoxal phosphate)lysine. T241 serves as a coordination point for pyridoxal 5'-phosphate. C326 acts as the Cysteine persulfide intermediate in catalysis. C326 contacts [2Fe-2S] cluster.

The protein belongs to the class-V pyridoxal-phosphate-dependent aminotransferase family. NifS/IscS subfamily. Homodimer. Forms a heterotetramer with IscU, interacts with other sulfur acceptors. Requires pyridoxal 5'-phosphate as cofactor.

Its subcellular location is the cytoplasm. The enzyme catalyses (sulfur carrier)-H + L-cysteine = (sulfur carrier)-SH + L-alanine. It functions in the pathway cofactor biosynthesis; iron-sulfur cluster biosynthesis. Master enzyme that delivers sulfur to a number of partners involved in Fe-S cluster assembly, tRNA modification or cofactor biosynthesis. Catalyzes the removal of elemental sulfur atoms from cysteine to produce alanine. Functions as a sulfur delivery protein for Fe-S cluster synthesis onto IscU, an Fe-S scaffold assembly protein, as well as other S acceptor proteins. This is Cysteine desulfurase IscS from Methylococcus capsulatus (strain ATCC 33009 / NCIMB 11132 / Bath).